Reading from the N-terminus, the 299-residue chain is Taste receptor type 2 member 4 (299 aa).

The Extracellular segment spans residues 1-9 (MLQLFYFSA). A helical transmembrane segment spans residues 10 to 30 (IIASVILNFVGIIMNLFIMVV). Residues 31 to 46 (NCKTWVKSHRISSSDR) are Cytoplasmic-facing. Residues 47–67 (ILFSLGITRFLMLGLFLVNTI) traverse the membrane as a helical segment. Residues 68-81 (FFVSSNTERSVYLS) lie on the Extracellular side of the membrane. Residues 82-102 (AFFVLCFMFXDSSSLWFVTLL) traverse the membrane as a helical segment. The Cytoplasmic segment spans residues 103–131 (NILYCVKITNFQHSVFLLLKQNISPKIPR). Residues 132–152 (LLLACVLISAFTTCLYITLSQ) form a helical membrane-spanning segment. Residues 153–172 (ASPFPELVTKRNNTSFNTHE) are Extracellular-facing. N-linked (GlcNAc...) asparagine glycosylation is found at asparagine 164 and asparagine 165. A helical membrane pass occupies residues 173–193 (GILSLVVSLVLSSSLQFIINV). The Cytoplasmic segment spans residues 194–230 (TSASLLIHSLRRHIQKMQKNATGFWNPQTEAHVGAMK). A helical membrane pass occupies residues 231–251 (LMIYFLILYIPYSVATLVQYL). The Extracellular segment spans residues 252-262 (PFYVGMDMGTK). A helical membrane pass occupies residues 263–283 (AICLIFATLYSPGHSVLIIIT). Residues 284 to 299 (HPKLKTTAKKILCFKK) lie on the Cytoplasmic side of the membrane.

The protein belongs to the G-protein coupled receptor T2R family.

It is found in the membrane. It localises to the cell projection. The protein resides in the cilium membrane. Its function is as follows. Gustducin-coupled receptor implicated in the perception of bitter compounds in the oral cavity and the gastrointestinal tract. Signals through PLCB2 and the calcium-regulated cation channel TRPM5. In airway epithelial cells, binding of denatonium increases the intracellular calcium ion concentration and stimulates ciliary beat frequency. The chain is Taste receptor type 2 member 4 (TAS2R4) from Pongo pygmaeus (Bornean orangutan).